The primary structure comprises 240 residues: Gas vesicle protein C (240 aa).

A compositionally biased stretch (basic and acidic residues) spans M1–G13. Positions M1 to E20 are disordered. 5 repeats span residues V18–F50, V51–F83, I84–F116, R117–F149, and R150–Y207. The 5 X 33 AA tandem repeats stretch occupies residues V18 to Y207.

Belongs to the gas vesicle GvpC family.

The protein resides in the gas vesicle. Its function is as follows. Confers stability, involved in shaping gas vesicles, hollow, gas filled proteinaceous nanostructures. During planktonic growth they allow positioning of the organism at a favorable depth for light or nutrient acquisition. In Planktothrix agardhii (Oscillatoria agardhii), this protein is Gas vesicle protein C.